A 429-amino-acid chain; its full sequence is Glutamate-1-semialdehyde 2,1-aminomutase 2 (429 aa).

N6-(pyridoxal phosphate)lysine is present on lysine 268.

The protein belongs to the class-III pyridoxal-phosphate-dependent aminotransferase family. HemL subfamily. Homodimer. Requires pyridoxal 5'-phosphate as cofactor.

The protein localises to the cytoplasm. The catalysed reaction is (S)-4-amino-5-oxopentanoate = 5-aminolevulinate. Its pathway is porphyrin-containing compound metabolism; protoporphyrin-IX biosynthesis; 5-aminolevulinate from L-glutamyl-tRNA(Glu): step 2/2. This Bacillus cereus (strain ATCC 10987 / NRS 248) protein is Glutamate-1-semialdehyde 2,1-aminomutase 2.